A 140-amino-acid chain; its full sequence is Secreted RxLR effector protein 37 (140 aa).

The signal sequence occupies residues 1–22 (MTYRLPFVAVILFVTAKHVVLA). Residues 57–76 (RFLRQLEKKPGVNDKRDEER) carry the RxLR-dEER motif.

Belongs to the RxLR effector family.

The protein localises to the secreted. The protein resides in the host nucleus. Its subcellular location is the host cytoplasm. Its function is as follows. Secreted effector that completely suppresses the host cell death induced by cell death-inducing proteins. The polypeptide is Secreted RxLR effector protein 37 (Plasmopara viticola (Downy mildew of grapevine)).